Here is a 264-residue protein sequence, read N- to C-terminus: 1H-3-hydroxy-4-oxoquinoline 2,4-dioxygenase (264 aa).

Substrate contacts are provided by residues 30-32 (WCQ), 94-95 (TS), and Trp153. The Proton donor/acceptor role is filled by His244.

It belongs to the AB hydrolase superfamily. None. Contrary to most other dioxygenases, this enzyme does not require a cofactor for catalysis. serves as cofactor.

The enzyme catalyses 3-hydroxy-1H-quinolin-4-one + O2 = N-formylanthranilate + CO + H(+). In terms of biological role, ring-cleaving dioxygenase involved in oxoquinoline degradation and utilization. The sequence is that of 1H-3-hydroxy-4-oxoquinoline 2,4-dioxygenase (qdo) from Pseudomonas putida (Arthrobacter siderocapsulatus).